Consider the following 187-residue polypeptide: Mitochondrial import receptor subunit TOM20-4 (187 aa).

Met-1 is modified (N-acetylmethionine). Residues 1 to 160 lie on the Cytoplasmic side of the membrane; the sequence is MDMQNENERL…QKKTSEFKYD (160 aa). The TPR repeat unit spans residues 84–117; that stretch reads LSFGFLSSDQTEASDNFEKASQFFQLAVEEQPES. A helical transmembrane segment spans residues 161–178; that stretch reads VFGWVILASYVVAWISFA. Residues 179–187 lie on the Mitochondrial intermembrane side of the membrane; that stretch reads NSQTPVSRQ. An AKR2A-binding sequence (ABS) required for mitochondrion outer membrane targeting motif is present at residues 179 to 187; the sequence is NSQTPVSRQ.

Belongs to the Tom20 family. Forms part of the preprotein translocase complex of the outer mitochondrial membrane (TOM complex) which consists of at least 6 different proteins (TOM5, TOM6, TOM7, TOM20, TOM22/TOM9 and TOM40). Interacts with a variety of mitochondrial precursor proteins. Interacts with AKR2A. Component of a mitochondrial large protein complex that contains, at least, MIC60, DGS1, TOM40, TOM20 proteins, and petC/RISP. The N-terminus is blocked. As to expression, expressed in roots, flowers, young cotyledons and leaves.

It is found in the mitochondrion outer membrane. In terms of biological role, central component of the receptor complex responsible for the recognition and translocation of cytosolically synthesized mitochondrial preproteins. Together with TOM22 functions as the transit peptide receptor at the surface of the mitochondrion outer membrane and facilitates the movement of preproteins into the translocation pore. This is Mitochondrial import receptor subunit TOM20-4 from Arabidopsis thaliana (Mouse-ear cress).